The sequence spans 362 residues: MIAEKIRVALDERSYDIEMGAGNLDRIGSLCREVGLSGTAAVVSNTTVAPLYYETVRLSMERAGYRVVPVTLPDGEGYKNSATLNLIYDGLVDASLDRGSFILALGGGVIGDMAGFAAASYLRGIPFVQIPTTLLSQVDSSVGGKTGINHPRGKNLIGAFYQPKAVLIDVATLDTLPKREFLSGLGEIVKYGAVLDGGFFDFLEKNAKLLLARDKEALIQAVSRSCAIKAKVVAEDEREGGVRAVLNYGHTLGHAVETLTGYTRYLHGEAVAIGMVQAARLSQHYGFCSQADRERIEALVVALGLPTELPSFPPQQYREALSHDKKVRDKGLLFICNQGIGAYRMERLTDLGALLEICGIGE.

NAD(+) is bound by residues 74–79, 108–112, 132–133, K145, K154, and 172–175; these read DGEGYK, GVIGD, TT, and TLDT. Zn(2+) is bound by residues E187, H250, and H267.

Belongs to the sugar phosphate cyclases superfamily. Dehydroquinate synthase family. Requires Co(2+) as cofactor. Zn(2+) serves as cofactor. It depends on NAD(+) as a cofactor.

The protein localises to the cytoplasm. It catalyses the reaction 7-phospho-2-dehydro-3-deoxy-D-arabino-heptonate = 3-dehydroquinate + phosphate. The protein operates within metabolic intermediate biosynthesis; chorismate biosynthesis; chorismate from D-erythrose 4-phosphate and phosphoenolpyruvate: step 2/7. Its function is as follows. Catalyzes the conversion of 3-deoxy-D-arabino-heptulosonate 7-phosphate (DAHP) to dehydroquinate (DHQ). This is 3-dehydroquinate synthase from Citrifermentans bemidjiense (strain ATCC BAA-1014 / DSM 16622 / JCM 12645 / Bem) (Geobacter bemidjiensis).